Reading from the N-terminus, the 546-residue chain is Pyrophosphate--fructose 6-phosphate 1-phosphotransferase (546 aa).

Gly80 provides a ligand contact to diphosphate. Asp174 is a Mg(2+) binding site. Substrate-binding positions include Thr202–Asp204, Lys241–Tyr242, Met249–Arg251, Glu310, and Tyr420–Arg423. The Proton acceptor role is filled by Asp204.

This sequence belongs to the phosphofructokinase type A (PFKA) family. PPi-dependent PFK group II subfamily. Clade 'Long' sub-subfamily. As to quaternary structure, homodimer. Mg(2+) is required as a cofactor. The cofactor is Mn(2+).

The protein localises to the cytoplasm. The catalysed reaction is beta-D-fructose 6-phosphate + diphosphate = beta-D-fructose 1,6-bisphosphate + phosphate + H(+). It participates in carbohydrate degradation; glycolysis; D-glyceraldehyde 3-phosphate and glycerone phosphate from D-glucose: step 3/4. Its activity is regulated as follows. Non-allosteric. Competitively inhibited by PPi, Pi and fructose 1,6-bisphosphate. Catalyzes the phosphorylation of D-fructose 6-phosphate, the first committing step of glycolysis. Uses inorganic phosphate (PPi) as phosphoryl donor instead of ATP like common ATP-dependent phosphofructokinases (ATP-PFKs), which renders the reaction reversible, and can thus function both in glycolysis and gluconeogenesis. Consistently, PPi-PFK can replace the enzymes of both the forward (ATP-PFK) and reverse (fructose-bisphosphatase (FBPase)) reactions. The chain is Pyrophosphate--fructose 6-phosphate 1-phosphotransferase from Entamoeba histolytica (strain ATCC 30459 / HM-1:IMSS / ABRM).